Here is a 443-residue protein sequence, read N- to C-terminus: ATP-dependent protease ATPase subunit HslU (443 aa).

ATP contacts are provided by residues Val18 and 60 to 65 (GVGKTE). Positions 139–160 (AKNNWGQPEESGEPSSARQNFR) are disordered. Asp256, Glu321, and Arg393 together coordinate ATP.

The protein belongs to the ClpX chaperone family. HslU subfamily. As to quaternary structure, a double ring-shaped homohexamer of HslV is capped on each side by a ring-shaped HslU homohexamer. The assembly of the HslU/HslV complex is dependent on binding of ATP.

It localises to the cytoplasm. Its function is as follows. ATPase subunit of a proteasome-like degradation complex; this subunit has chaperone activity. The binding of ATP and its subsequent hydrolysis by HslU are essential for unfolding of protein substrates subsequently hydrolyzed by HslV. HslU recognizes the N-terminal part of its protein substrates and unfolds these before they are guided to HslV for hydrolysis. In Sodalis glossinidius (strain morsitans), this protein is ATP-dependent protease ATPase subunit HslU.